Reading from the N-terminus, the 120-residue chain is uncharacterized protein (120 aa).

Helical transmembrane passes span 20 to 39 (FFWP…CYLL), 52 to 71 (GSSL…LFSI), and 86 to 108 (ILVV…SIIG).

The protein resides in the cell membrane. This is an uncharacterized protein from Pasteurella multocida (strain Pm70).